Here is a 174-residue protein sequence, read N- to C-terminus: Large ribosomal subunit protein uL10 (174 aa).

This sequence belongs to the universal ribosomal protein uL10 family. Part of the ribosomal stalk of the 50S ribosomal subunit. The N-terminus interacts with L11 and the large rRNA to form the base of the stalk. The C-terminus forms an elongated spine to which L12 dimers bind in a sequential fashion forming a multimeric L10(L12)X complex.

Its function is as follows. Forms part of the ribosomal stalk, playing a central role in the interaction of the ribosome with GTP-bound translation factors. The polypeptide is Large ribosomal subunit protein uL10 (Anaeromyxobacter sp. (strain Fw109-5)).